Consider the following 417-residue polypeptide: Citrate synthase-related protein DDB_G0287281 (417 aa).

Residues asparagine 284–asparagine 317 are disordered. Positions asparagine 286–asparagine 309 are enriched in low complexity.

It belongs to the citrate synthase family.

This is Citrate synthase-related protein DDB_G0287281 from Dictyostelium discoideum (Social amoeba).